The sequence spans 294 residues: 4-hydroxy-tetrahydrodipicolinate synthase (294 aa).

Threonine 44 serves as a coordination point for pyruvate. Tyrosine 132 acts as the Proton donor/acceptor in catalysis. Lysine 161 acts as the Schiff-base intermediate with substrate in catalysis. A pyruvate-binding site is contributed by isoleucine 203.

This sequence belongs to the DapA family. In terms of assembly, homotetramer; dimer of dimers.

Its subcellular location is the cytoplasm. It catalyses the reaction L-aspartate 4-semialdehyde + pyruvate = (2S,4S)-4-hydroxy-2,3,4,5-tetrahydrodipicolinate + H2O + H(+). It functions in the pathway amino-acid biosynthesis; L-lysine biosynthesis via DAP pathway; (S)-tetrahydrodipicolinate from L-aspartate: step 3/4. Catalyzes the condensation of (S)-aspartate-beta-semialdehyde [(S)-ASA] and pyruvate to 4-hydroxy-tetrahydrodipicolinate (HTPA). The chain is 4-hydroxy-tetrahydrodipicolinate synthase from Aquifex aeolicus (strain VF5).